The following is a 497-amino-acid chain: G protein-coupled receptor gprM (497 aa).

Residue asparagine 3 is glycosylated (N-linked (GlcNAc...) asparagine). 5 consecutive transmembrane segments (helical) span residues 66–86, 98–118, 138–158, 179–199, and 221–241; these read ISVA…VLPV, FTLG…PLGV, CAFT…WSFL, WGAL…MLIL, and YWIP…ATMA. Asparagine 259 is a glycosylation site (N-linked (GlcNAc...) asparagine). Transmembrane regions (helical) follow at residues 293 to 313 and 357 to 377; these read VTLV…FIEL and LLLA…ILFA. An N-linked (GlcNAc...) asparagine glycan is attached at asparagine 421. The tract at residues 428 to 497 is disordered; it reads YKSPSPMVRS…APAVYREYDD (70 aa).

The protein belongs to the G-protein coupled receptor GPR1/git3 family. In terms of assembly, interacts with gpaA.

The protein resides in the cell membrane. In terms of biological role, g protein-coupled receptor that plays a role in conidiation and regulation of the biosynthesis of secondary metabolites such as dihydroxynaphthalene (DHN)-melanin, via interaction with the G-protein complex alpha subunit gpaA. This chain is G protein-coupled receptor gprM, found in Aspergillus fumigatus (strain CBS 144.89 / FGSC A1163 / CEA10) (Neosartorya fumigata).